Consider the following 292-residue polypeptide: AT-hook motif nuclear-localized protein 23 (292 aa).

The disordered stretch occupies residues 23 to 100 (HLHHNSSSDD…SKNKPKPPVI (78 aa)). Over residues 60-79 (SGGGSGSSGGGGGHGGGGDV) the composition is skewed to gly residues. Positions 82 to 94 (RRPRGRPPGSKNK) form a DNA-binding region, a.T hook. Residues 106 to 242 (ANTLRAHILE…EDEQQQQLGG (137 aa)) form the PPC domain.

It is found in the nucleus. Functionally, transcription factor that specifically binds AT-rich DNA sequences related to the nuclear matrix attachment regions (MARs). This is AT-hook motif nuclear-localized protein 23 from Arabidopsis thaliana (Mouse-ear cress).